A 501-amino-acid chain; its full sequence is Glycerol kinase (501 aa).

Thr17 lines the ADP pocket. Residues Thr17, Thr18, and Ser19 each coordinate ATP. Thr17 lines the sn-glycerol 3-phosphate pocket. Residue Arg21 participates in ADP binding. Residues Arg87, Glu88, Tyr139, and Asp243 each contribute to the sn-glycerol 3-phosphate site. Arg87, Glu88, Tyr139, Asp243, and Gln244 together coordinate glycerol. Positions 265 and 308 each coordinate ADP. The ATP site is built by Thr265, Gly308, Gln312, and Gly409. 2 residues coordinate ADP: Gly409 and Asn413.

Belongs to the FGGY kinase family.

It catalyses the reaction glycerol + ATP = sn-glycerol 3-phosphate + ADP + H(+). It functions in the pathway polyol metabolism; glycerol degradation via glycerol kinase pathway; sn-glycerol 3-phosphate from glycerol: step 1/1. Inhibited by fructose 1,6-bisphosphate (FBP). In terms of biological role, key enzyme in the regulation of glycerol uptake and metabolism. Catalyzes the phosphorylation of glycerol to yield sn-glycerol 3-phosphate. This chain is Glycerol kinase, found in Pseudomonas syringae pv. syringae (strain B728a).